Here is a 1227-residue protein sequence, read N- to C-terminus: Anion exchange protein 3 (1227 aa).

Residues 1-15 (MANGVIPPPGGPSPL) are compositionally biased toward pro residues. Disordered regions lie at residues 1–255 (MANG…TDEA), 286–312 (KPSR…KKKK), and 428–497 (NDDK…GDGH). Residues 1-707 (MANGVIPPPG…DLRDALHSQC (707 aa)) lie on the Cytoplasmic side of the membrane. Residues 58–75 (DPEKPSRSYSERDFEFHR) are compositionally biased toward basic and acidic residues. 2 stretches are compositionally biased toward basic residues: residues 76–97 (HTSH…KLRR) and 104–113 (RHARRKRKKE). Over residues 134 to 152 (AEEEEEEEEEEEGESEAEP) the composition is skewed to acidic residues. Phosphoserine is present on residues Ser167, Ser170, Ser175, and Ser198. Residues 194–215 (PSDQSPQRSGSSPSPRARASRI) are compositionally biased toward low complexity. Omega-N-methylarginine is present on Arg294. Low complexity predominate over residues 435–448 (FFPRNPSSSSVNSV). A compositionally biased stretch (basic and acidic residues) spans 480 to 497 (HDPDAKEKPLHMPGGDGH). A run of 4 helical transmembrane segments spans residues 708-730 (VAAV…GLLG), 736-773 (LMGV…LLVF), 793-815 (VWVG…SFLV), and 825-846 (IFAF…YKVF). Residues 708 to 1227 (VAAVLFIYFA…DEYNELHMPV (520 aa)) form a membrane (anion exchange) region. N-linked (GlcNAc...) asparagine glycosylation occurs at Asn868. Residues 888–905 (ALLSLILMLGTFLIAFFL) form a helical membrane-spanning segment. The Cytoplasmic portion of the chain corresponds to 906–920 (RKFRNSRFLGGKARR). A run of 5 helical transmembrane segments spans residues 921 to 941 (VIGD…DYSI), 975 to 997 (PFPP…LIFM), 1023 to 1044 (LLLI…LTAA), 1078 to 1123 (VTGV…IQLS), and 1150 to 1186 (MHLF…TVPL). Cys1160 carries S-palmitoyl cysteine lipidation.

It belongs to the anion exchanger (TC 2.A.31) family. As to expression, expressed in the brain and heart.

The protein resides in the cell membrane. It catalyses the reaction hydrogencarbonate(in) + chloride(out) = hydrogencarbonate(out) + chloride(in). Its function is as follows. Sodium-independent anion exchanger which mediates the electroneutral exchange of chloride for bicarbonate ions across the cell membrane. May be involved in the regulation of intracellular pH, and the modulation of cardiac action potential. The polypeptide is Anion exchange protein 3 (Slc4a3) (Rattus norvegicus (Rat)).